The following is a 134-amino-acid chain: TSC22 domain family protein 3 (134 aa).

An AP1-binding region spans residues 1 to 60 (MNTEMYQTPMEVAVYQLHNFSISFFSSLLGGDVVSVKLDNSASGASVVALDNKIEQAMDL). Positions 76 to 97 (LKEQIRELVEKNSQLERENTLL) are leucine-zipper. Residues 101 to 134 (ASPEQLEKFQSRLSPEEPAPEAPETPEAPGGSAV) form a disordered region. Ser102 is subject to Phosphoserine. Phosphothreonine is present on Thr125. Low complexity predominate over residues 125–134 (TPEAPGGSAV).

Belongs to the TSC-22/Dip/Bun family. In terms of assembly, can form homodimers, however it is likely to function as a monomer. Interacts with NFKB1. Interacts (via N-terminus) with JUN and FOS; these interactions inhibit the binding of active AP1 to its target DNA. Interacts with MYOD1. Interacts with HDAC1; this interaction affects HDAC1 activity on MYOG promoter and thus inhibits MYOD1 transcriptional activity.

It localises to the cytoplasm. Its subcellular location is the nucleus. In terms of biological role, protects T-cells from IL2 deprivation-induced apoptosis through the inhibition of FOXO3A transcriptional activity that leads to the down-regulation of the pro-apoptotic factor BCL2L11. In macrophages, plays a role in the anti-inflammatory and immunosuppressive effects of glucocorticoids and IL10. In T-cells, inhibits anti-CD3-induced NFKB1 nuclear translocation and thereby NFKB1 DNA-binding activities. In vitro, suppresses AP-1 transcription factor complex DNA-binding activities. This is TSC22 domain family protein 3 (Tsc22d3) from Rattus norvegicus (Rat).